An 837-amino-acid chain; its full sequence is Semaphorin-4G (837 aa).

The first 17 residues, 1-17 (MWGRLWPLLFSFLTVTA), serve as a signal peptide directing secretion. The Extracellular portion of the chain corresponds to 18-673 (VPGPSLRRPS…GAQLAHDMRM (656 aa)). Residues 35–503 (RLTISYEELS…AASGVLQFPL (469 aa)) enclose the Sema domain. Residues Asn55, Asn111, and Asn126 are each glycosylated (N-linked (GlcNAc...) asparagine). The cysteines at positions 104 and 115 are disulfide-linked. Intrachain disulfides connect Cys133–Cys142, Cys268–Cys375, and Cys292–Cys335. An N-linked (GlcNAc...) asparagine glycan is attached at Asn386. In terms of domain architecture, PSI spans 505–556 (SCSRYQSCYDCILARDPYCGWDSSIHACMVATTVANRTELIQDIERGNRGCE). Cystine bridges form between Cys506–Cys523 and Cys515–Cys532. Asn540 and Asn596 each carry an N-linked (GlcNAc...) asparagine glycan. Positions 565–647 (PPLKTRSVLR…RMLLASYSLT (83 aa)) constitute an Ig-like C2-type domain. A disulfide bridge connects residues Cys582 and Cys630. Residues 674 to 694 (FYVVAIAILGGLCLILASSLL) traverse the membrane as a helical segment. At 695–837 (YVACLKGGRR…LVEQLDESSV (143 aa)) the chain is on the cytoplasmic side. A disordered region spans residues 721 to 776 (SAVQLQTVSGQCPGEEDEGDDGEGTGGLESGCLQIIPGEGAPAPPPPPPPPPPAEL). A compositionally biased stretch (acidic residues) spans 734–743 (GEEDEGDDGE). Pro residues predominate over residues 762–774 (PAPPPPPPPPPPA). A phosphoserine mark is found at Ser794 and Ser836.

It belongs to the semaphorin family. In terms of assembly, interacts with PLXNB2. In terms of tissue distribution, brain, spinal cord, and several sensory organs as well as specific populations of projection neurons.

Its subcellular location is the cell membrane. Its function is as follows. Cell surface receptor for PLXNB2. May play a role in axon guidance. This chain is Semaphorin-4G (Sema4g), found in Mus musculus (Mouse).